The sequence spans 338 residues: HLA class I histocompatibility antigen, alpha chain G (338 aa).

The N-terminal stretch at 1 to 24 (MVVMAPRTLFLLLSGALTLTETWA) is a signal peptide. Positions 3 to 11 (VMAPRTLFL) are VL9 epitope. Positions 25–114 (GSHSMRYFSA…LRGYYNQSEA (90 aa)) are alpha-1. Topologically, residues 25–308 (GSHSMRYFSA…KQSSLPTIPI (284 aa)) are extracellular. A peptide antigen is bound by residues tyrosine 31, histidine 94, asparagine 101, and tyrosine 108. The N-linked (GlcNAc...) asparagine glycan is linked to asparagine 110. The alpha-2 stretch occupies residues 115-206 (SSHTLQWMIG…ENGKEMLQRA (92 aa)). Cysteine 125 and cysteine 188 are disulfide-bonded. 6 residues coordinate a peptide antigen: serine 167, lysine 170, glutamine 179, arginine 180, tyrosine 183, and tyrosine 195. The tract at residues 207–298 (DPPKTHVTHH…GLPEPLMLRW (92 aa)) is alpha-3. The region spanning 209–299 (PKTHVTHHPV…LPEPLMLRWK (91 aa)) is the Ig-like C1-type domain. A disulfide bridge connects residues cysteine 227 and cysteine 283. Positions 299–308 (KQSSLPTIPI) are connecting peptide. The chain crosses the membrane as a helical span at residues 309–332 (MGIVAGLVVLAAVVTGAAVAAVLW). The Cytoplasmic segment spans residues 333 to 338 (RKKSSD). The ER-retrieval signal motif lies at 334 to 336 (KKS).

This sequence belongs to the MHC class I family. Forms a heterotrimer with B2M and a self-peptide (peptide-bound HLA-G-B2M). HLA-G-B2M complex interacts with components of the antigen processing machinery TAPBP and TAP1-TAP2 complex; this interaction is required for loading of high affinity peptides and heterotrimer translocation to the cell surface. Interacts with CALCR; this interaction is required for appropriate folding. Interacts with COPB1; this interaction mediates the endoplasmic reticulum (ER) retrieval of HLA-G-B2M complexes that bind low affinity peptides. On the cell surface, peptide-bound HLA-G-B2M molecules (referred to as monomers) can form disulfide-linked homomultimers, homodimers and homotrimers. Interacts with KIR2DL4; this interaction is direct. Interacts with LILRB1 and LILRB2 receptors; this interaction is direct. Interacts with CD160; this interactions is direct. Interacts with CD8A homodimer; this interaction is direct and might down-regulate T cell receptor signaling. Isoform 2: Forms a non-disulfide-linked homodimer and interacts with LILRB2. In terms of processing, N-glycosylated. Post-translationally, produced by proteolytic cleavage at the cell surface (shedding) by matrix metalloproteinase MMP2. As to expression, expressed in adult eye. Expressed in immune cell subsets including monocytes, myeloid and plasmacytoid dendritic cells and regulatory T cells (Tr1)(at protein level). Secreted by follicular dendritic cell and follicular helper T cells. Detected in physiological fluids including amniotic fluid and serum. In terms of tissue distribution, expressed in placenta, amniotic membrane, skin, cord blood and peripheral blood mononuclear cells.

Its subcellular location is the cell membrane. It is found in the endoplasmic reticulum membrane. It localises to the early endosome membrane. The protein resides in the secreted. The protein localises to the early endosome. Its subcellular location is the cell projection. It is found in the filopodium membrane. In terms of biological role, non-classical major histocompatibility class Ib molecule involved in immune regulatory processes at the maternal-fetal interface. In complex with B2M/beta-2 microglobulin binds a limited repertoire of nonamer self-peptides derived from intracellular proteins including histones and ribosomal proteins. Peptide-bound HLA-G-B2M complex acts as a ligand for inhibitory/activating KIR2DL4, LILRB1 and LILRB2 receptors on uterine immune cells to promote fetal development while maintaining maternal-fetal tolerance. Upon interaction with KIR2DL4 and LILRB1 receptors on decidual NK cells, it triggers NK cell senescence-associated secretory phenotype as a molecular switch to promote vascular remodeling and fetal growth in early pregnancy. Through interaction with KIR2DL4 receptor on decidual macrophages induces pro-inflammatory cytokine production mainly associated with tissue remodeling. Through interaction with LILRB2 receptor triggers differentiation of type 1 regulatory T cells and myeloid-derived suppressor cells, both of which actively maintain maternal-fetal tolerance. May play a role in balancing tolerance and antiviral-immunity at maternal-fetal interface by keeping in check the effector functions of NK, CD8+ T cells and B cells. Reprograms B cells toward an immune suppressive phenotype via LILRB1. May induce immune activation/suppression via intercellular membrane transfer (trogocytosis), likely enabling interaction with KIR2DL4, which resides mostly in endosomes. Through interaction with the inhibitory receptor CD160 on endothelial cells may control angiogenesis in immune privileged sites. Functionally, likely does not bind B2M and presents peptides. Negatively regulates NK cell- and CD8+ T cell-mediated cytotoxicity. Its function is as follows. Non-classical major histocompatibility class Ib molecule involved in immune regulatory processes at the maternal-fetal interface. In complex with B2M/beta-2 microglobulin binds a limited repertoire of nonamer self-peptides derived from intracellular proteins including histones and ribosomal proteins. Peptide-bound HLA-G-B2M complex acts as a ligand for inhibitory/activating KIR2DL4, LILRB1 and LILRB2 receptors on uterine immune cells to promote fetal development while maintaining maternal-fetal tolerance. Upon interaction with KIR2DL4 and LILRB1 receptors on decidual NK cells, it triggers NK cell senescence-associated secretory phenotype as a molecular switch to promote vascular remodeling and fetal growth in early pregnancy. Through interaction with KIR2DL4 receptor on decidual macrophages induces pro-inflammatory cytokine production mainly associated with tissue remodeling. Through interaction with LILRB2 receptor triggers differentiation of type 1 regulatory T cells and myeloid-derived suppressor cells, both of which actively maintain maternal-fetal tolerance. Reprograms B cells toward an immune suppressive phenotype via LILRB1. Likely does not bind B2M and presents peptides. The polypeptide is HLA class I histocompatibility antigen, alpha chain G (Homo sapiens (Human)).